A 209-amino-acid polypeptide reads, in one-letter code: MGNGMNKILPSLFIGNFKDARDVEQLHKNNITHILSIHDSARPMLEGMKYLCIPASDSPSQNLIQHFKDSIAFIHECRLKGEGCLVHCLAGVSRSVTLVVAYVMTVTDFGWEDALSAVRGARTCANPNMGFQKQLEDFGKHDVYQFRTWLKETYGENPFNDKDDAKQLLDKHKQQEAAESQSATSSGRQWSSHLTSLSSMSYSNYTTET.

One can recognise a Tyrosine-protein phosphatase domain in the interval 4–144 (GMNKILPSLF…LEDFGKHDVY (141 aa)). Cysteine 88 acts as the Phosphocysteine intermediate in catalysis. A disordered region spans residues 170–193 (DKHKQQEAAESQSATSSGRQWSSH). Low complexity predominate over residues 177–193 (AAESQSATSSGRQWSSH).

It belongs to the protein-tyrosine phosphatase family. Non-receptor class dual specificity subfamily.

Its subcellular location is the cytoplasm. It localises to the nucleus. The enzyme catalyses O-phospho-L-tyrosyl-[protein] + H2O = L-tyrosyl-[protein] + phosphate. The catalysed reaction is O-phospho-L-seryl-[protein] + H2O = L-seryl-[protein] + phosphate. It carries out the reaction O-phospho-L-threonyl-[protein] + H2O = L-threonyl-[protein] + phosphate. Its function is as follows. Activates the Jnk signaling pathway. Dephosphorylates and deactivates p38 and stress-activated protein kinase/c-Jun N-terminal kinase (SAPK/JNK). The polypeptide is Dual specificity protein phosphatase 22 (dusp22) (Xenopus tropicalis (Western clawed frog)).